The following is a 106-amino-acid chain: Biogenesis of lysosome-related organelles complex 1 subunit 6 (106 aa).

The tract at residues 78–106 (KKTSQLELSDTNIEDGSTTSTPTTTNKSQ) is disordered. Residues 82-93 (QLELSDTNIEDG) show a composition bias toward polar residues. The span at 94–106 (STTSTPTTTNKSQ) shows a compositional bias: low complexity.

The protein belongs to the BLOC1S6 family. Homodimer (isoform 1). Component of the biogenesis of lysosome-related organelles complex-1 (BLOC-1) composed at least of blos-1, blos-2, blos-4, dsbn-1, glo-2, mutd-1 and snpn-1. Isoform 1 interacts with blos-1 and blos-4.

It is found in the cytoplasm. Its subcellular location is the endosome. Component of the biogenesis of lysosome-related organelles complex-1 (BLOC-1) involved in gut granule biogenesis. This Caenorhabditis elegans protein is Biogenesis of lysosome-related organelles complex 1 subunit 6 (glo-2).